The chain runs to 407 residues: Divalent metal cation transporter MntH (407 aa).

11 helical membrane passes run 16-36 (LTLL…GNFA), 43-63 (STFG…AMLV), 95-115 (WVQA…GAAV), 119-139 (LLLG…TWGI), 152-172 (FVVG…LVFS), 193-213 (AVYL…IYLH), 239-259 (IAMT…AAAF), 288-308 (LFGL…TLAG), 318-338 (FTIP…VVIA), 346-366 (ILVL…IPLL), and 387-407 (VGRL…VAMI).

It belongs to the NRAMP family.

It is found in the cell inner membrane. H(+)-stimulated, divalent metal cation uptake system. The chain is Divalent metal cation transporter MntH from Aeromonas hydrophila subsp. hydrophila (strain ATCC 7966 / DSM 30187 / BCRC 13018 / CCUG 14551 / JCM 1027 / KCTC 2358 / NCIMB 9240 / NCTC 8049).